Reading from the N-terminus, the 380-residue chain is uncharacterized protein (380 aa).

An N-terminal signal peptide occupies residues 1 to 18; sequence MALRHLALLAGLLVGVAS. 3 N-linked (GlcNAc...) asparagine glycosylation sites follow: N104, N111, and N128. A helical membrane pass occupies residues 148–168; it reads LFLGTFFISSGLILSVAGFFY. Disordered regions lie at residues 229–256 and 336–380; these read PQTG…QGQG and RFSG…ISNV. The span at 240 to 249 shows a compositional bias: pro residues; that stretch reads PPLPGSPGDP. Basic and acidic residues predominate over residues 356–366; the sequence is VRRERPLDRAT.

Its subcellular location is the membrane. This is an uncharacterized protein from Homo sapiens (Human).